A 428-amino-acid chain; its full sequence is Dihydroorotase (428 aa).

Zn(2+) contacts are provided by H61 and H63. Substrate is bound by residues 63–65 (HLR) and N95. Zn(2+) is bound by residues D153, H180, and H233. N279 contributes to the substrate binding site. A Zn(2+)-binding site is contributed by D306. D306 is an active-site residue. Substrate is bound by residues H310 and 324 to 325 (FG).

This sequence belongs to the metallo-dependent hydrolases superfamily. DHOase family. Class I DHOase subfamily. Zn(2+) is required as a cofactor.

The catalysed reaction is (S)-dihydroorotate + H2O = N-carbamoyl-L-aspartate + H(+). The protein operates within pyrimidine metabolism; UMP biosynthesis via de novo pathway; (S)-dihydroorotate from bicarbonate: step 3/3. Functionally, catalyzes the reversible cyclization of carbamoyl aspartate to dihydroorotate. The polypeptide is Dihydroorotase (Geobacillus thermodenitrificans (strain NG80-2)).